A 105-amino-acid polypeptide reads, in one-letter code: UPF0251 protein AF_0666 (105 aa).

This sequence belongs to the UPF0251 family.

The sequence is that of UPF0251 protein AF_0666 from Archaeoglobus fulgidus (strain ATCC 49558 / DSM 4304 / JCM 9628 / NBRC 100126 / VC-16).